We begin with the raw amino-acid sequence, 198 residues long: Carnitine operon protein CaiE (198 aa).

The disordered stretch occupies residues 174–198 (KPLTQAEENRPRLKGTTDVKPKSAQ). A compositionally biased stretch (basic and acidic residues) spans 180-198 (EENRPRLKGTTDVKPKSAQ).

Belongs to the transferase hexapeptide repeat family.

The protein operates within amine and polyamine metabolism; carnitine metabolism. In terms of biological role, overproduction of CaiE stimulates the activity of CaiB and CaiD. The polypeptide is Carnitine operon protein CaiE (Salmonella dublin (strain CT_02021853)).